A 101-amino-acid polypeptide reads, in one-letter code: DNA-binding protein HU (101 aa).

The protein belongs to the bacterial histone-like protein family. Homodimer.

In terms of biological role, histone-like DNA-binding protein which is capable of wrapping DNA to stabilize it, and thus to prevent its denaturation under extreme environmental conditions. This chain is DNA-binding protein HU (hup), found in Rickettsia bellii (strain RML369-C).